Consider the following 178-residue polypeptide: ATP-dependent protease subunit HslV (178 aa).

Residue Thr7 is part of the active site. Residues Gly162, Cys165, and Thr168 each coordinate Na(+).

Belongs to the peptidase T1B family. HslV subfamily. As to quaternary structure, a double ring-shaped homohexamer of HslV is capped on each side by a ring-shaped HslU homohexamer. The assembly of the HslU/HslV complex is dependent on binding of ATP.

The protein localises to the cytoplasm. The enzyme catalyses ATP-dependent cleavage of peptide bonds with broad specificity.. Its activity is regulated as follows. Allosterically activated by HslU binding. In terms of biological role, protease subunit of a proteasome-like degradation complex believed to be a general protein degrading machinery. The polypeptide is ATP-dependent protease subunit HslV (Paraburkholderia xenovorans (strain LB400)).